Consider the following 571-residue polypeptide: Proline--tRNA ligase (571 aa).

The protein belongs to the class-II aminoacyl-tRNA synthetase family. ProS type 1 subfamily. In terms of assembly, homodimer.

It localises to the cytoplasm. It catalyses the reaction tRNA(Pro) + L-proline + ATP = L-prolyl-tRNA(Pro) + AMP + diphosphate. Catalyzes the attachment of proline to tRNA(Pro) in a two-step reaction: proline is first activated by ATP to form Pro-AMP and then transferred to the acceptor end of tRNA(Pro). As ProRS can inadvertently accommodate and process non-cognate amino acids such as alanine and cysteine, to avoid such errors it has two additional distinct editing activities against alanine. One activity is designated as 'pretransfer' editing and involves the tRNA(Pro)-independent hydrolysis of activated Ala-AMP. The other activity is designated 'posttransfer' editing and involves deacylation of mischarged Ala-tRNA(Pro). The misacylated Cys-tRNA(Pro) is not edited by ProRS. The protein is Proline--tRNA ligase of Shewanella baltica (strain OS195).